The following is a 159-amino-acid chain: Phosphopantetheine adenylyltransferase (159 aa).

Substrate is bound at residue Thr-10. Residues 10-11 (TF) and His-18 each bind ATP. Substrate is bound by residues Lys-42, Met-74, and Arg-88. Residues 89–91 (GLR), Glu-99, and 124–130 (WSFISSS) each bind ATP.

The protein belongs to the bacterial CoaD family. In terms of assembly, homohexamer. Mg(2+) is required as a cofactor.

The protein localises to the cytoplasm. The enzyme catalyses (R)-4'-phosphopantetheine + ATP + H(+) = 3'-dephospho-CoA + diphosphate. The protein operates within cofactor biosynthesis; coenzyme A biosynthesis; CoA from (R)-pantothenate: step 4/5. Functionally, reversibly transfers an adenylyl group from ATP to 4'-phosphopantetheine, yielding dephospho-CoA (dPCoA) and pyrophosphate. In Shigella sonnei (strain Ss046), this protein is Phosphopantetheine adenylyltransferase.